Consider the following 287-residue polypeptide: MDAGVGLRAKPGAWAGLGNPRRSSTARVPVRFAVEKFAQPLVLGSDRRSCGAKLKVSCSRKPAGIDKTYYSADEALVLKQKAEDVVPYLNDRCIYLVGMMGSGKTTVGKILAEVLGYSFFDSDKLVEKAVGISSVAEIFQLHSEAFFRDNESEVLRDLSSMHRLVVATGGGAVIRPINWSYMKKGSTIWLDVPLDALARRIAAVGTASRPLLHQESGDPYAKAYAKLTALFEQRMDSYANADARVSLEHIAVKQGHSNVTTLTPSAIAIEALLKMESFLTEKAMIRN.

Residues 1–57 (MDAGVGLRAKPGAWAGLGNPRRSSTARVPVRFAVEKFAQPLVLGSDRRSCGAKLKVS) constitute a chloroplast transit peptide. Residue 98–105 (GMMGSGKT) coordinates ATP. Thr105 contacts Mg(2+). Positions 123, 148, and 170 each coordinate substrate. Residue Arg209 coordinates ATP.

It belongs to the shikimate kinase family. Requires Mg(2+) as cofactor. As to expression, expressed in panicles.

It is found in the plastid. It localises to the chloroplast. The enzyme catalyses shikimate + ATP = 3-phosphoshikimate + ADP + H(+). It participates in metabolic intermediate biosynthesis; chorismate biosynthesis; chorismate from D-erythrose 4-phosphate and phosphoenolpyruvate: step 5/7. Its function is as follows. Catalyzes the specific phosphorylation of the 3-hydroxyl group of shikimic acid using ATP as a cosubstrate. In Oryza sativa subsp. japonica (Rice), this protein is Shikimate kinase 3, chloroplastic (SK3).